The following is a 304-amino-acid chain: uncharacterized protein (304 aa).

The first 25 residues, 1–25 (MVKTAMLGAVALVIALGGTCGVADA), serve as a signal peptide directing secretion. Residues 34-303 (PMIVAHRAGT…DSPLAAQQWR (270 aa)) enclose the GP-PDE domain.

This is an uncharacterized protein from Mycobacterium tuberculosis (strain CDC 1551 / Oshkosh).